The primary structure comprises 353 residues: MGLCQSAEDKELTLKSKAIDKEMMQNHMSQQKVVKLLLLGAGECGKSTVLKQMRILHDHGFTAEEAEQQKSVVFNNTLQAMTAILKGMEALRMTFDKPIRENDAKFVMESHKMLQEAKVFPEELANAIQALWNDKAVQQVIAKGNEFQMPESAPHFLSSLDRIKLPDYNPTEQDILLSRIKTTGIVEVKFQMKSVDFRVFDVGGQRSERKKWIHCFEDVNAIIFIAAISEYDQVLFEDETTNRMIESMRLFESICNSRWFINTSMILFLNKKDLFAEKIKRTSIKSAFPDYKGAQTYDESCRYIEEKFDGLNANPEKTIYMHQTCATDTDQVQMILDSVIDMIIQANLQGCGL.

A lipid anchor (N-myristoyl glycine) is attached at glycine 2. Cysteine 4 carries the S-palmitoyl cysteine lipid modification. The G-alpha domain maps to 32-353 (KVVKLLLLGA…IQANLQGCGL (322 aa)). Residues 35–48 (KLLLLGAGECGKST) form a G1 motif region. Residues 40 to 47 (GAGECGKS), 176 to 182 (LLSRIKT), 201 to 205 (DVGGQ), 270 to 273 (NKKD), and alanine 326 each bind GTP. Mg(2+)-binding residues include serine 47 and threonine 182. The interval 174 to 182 (DILLSRIKT) is G2 motif. The tract at residues 197-206 (FRVFDVGGQR) is G3 motif. The tract at residues 266–273 (ILFLNKKD) is G4 motif. Positions 324 to 329 (TCATDT) are G5 motif.

Belongs to the G-alpha family. G(q) subfamily. G proteins are composed of 3 units; alpha, beta and gamma. The alpha chain contains the guanine nucleotide binding site.

In terms of biological role, guanine nucleotide-binding proteins (G proteins) are involved as modulators or transducers in various transmembrane signaling systems. Promotes transcription of 3',5'-cyclic phosphodiesterases pde-1 and pde-5, leading to reduced cGMP levels in sensory neurons. This causes suppression of insulin production and signaling which leads to increased daf-16 activity and contributes to increased adult lifespan and resistance to oxidative stress. In addition, by reducing cGMP levels, inhibits TGF-beta signaling pathways. Involved in behavioral response to P.aeruginosa by controlling the expression of daf-7, a member of the TGF-beta family, in ASJ sensory neurons. Plays a role in the avoidance response to the noxious chemical quinine in ASH sensory neurons. The chain is Guanine nucleotide-binding protein alpha-3 subunit from Caenorhabditis elegans.